A 211-amino-acid chain; its full sequence is Nucleoside diphosphate kinase homolog 5 (211 aa).

An NDK region spans residues 13–145 (EKTLALIKPD…EREIRFMFPA (133 aa)).

It belongs to the NDK family. Component of the axonemal radial spoke complex 1 (RS1), at least composed of spoke head proteins RSPH1, RSPH3, RSPH9 and the cilia-specific component RSPH4A or sperm-specific component RSPH6A, spoke stalk proteins RSPH14, DNAJB13, DYDC1, ROPN1L and NME5, and the anchor protein IQUB. Interacts with IQUB. As to expression, expressed in the trachea, ependymal cells and oviduct (at protein level). Expressed predominantly in germ cells of the testis. Not expressed in testicular somatic cells.

It is found in the cell projection. The protein localises to the cilium. The protein resides in the cytoplasm. It localises to the cytoskeleton. Its subcellular location is the flagellum axoneme. Functionally, functions as part of axonemal radial spoke complexes that play an important part in the motility of sperm and cilia. Does not seem to have nucleoside diphosphate kinase (NDPK) activity. Confers protection from cell death by BAX and alters the cellular levels of several antioxidant enzymes including GPX5. May play a role in spermiogenesis by increasing the ability of late-stage spermatids to eliminate reactive oxygen species. This chain is Nucleoside diphosphate kinase homolog 5 (Nme5), found in Mus musculus (Mouse).